We begin with the raw amino-acid sequence, 347 residues long: Secretory carrier-associated membrane protein 3 (347 aa).

The tract at residues 1 to 88 is disordered; it reads MAQSRDGGNP…EPKNYGSYST (88 aa). The Cytoplasmic segment spans residues 1-170; that stretch reads MAQSRDGGNP…QKTVSTMYYL (170 aa). Residue serine 32 is modified to Phosphoserine. A Phosphothreonine modification is found at threonine 37. Tyrosine 41 and tyrosine 53 each carry phosphotyrosine. Positions 49–66 are enriched in pro residues; the sequence is PPPAYEPPAPAPLPPPSA. Phosphoserine occurs at positions 72 and 76. A Phosphotyrosine modification is found at tyrosine 83. The residue at position 85 (serine 85) is a Phosphoserine. 4 helical membrane-spanning segments follow: residues 171 to 191, 197 to 217, 247 to 267, and 277 to 297; these read WMCS…SFCV, AGFG…FVCW, FVLQ…SALV, and VLML…IVML. Topologically, residues 298–347 are cytoplasmic; that stretch reads KRIHSLYRRTGASFQKAQQEFAAGVFSNPAVRTAAANAAAGAAENAFRAP. Lysine 313 participates in a covalent cross-link: Glycyl lysine isopeptide (Lys-Gly) (interchain with G-Cter in SUMO1).

The protein belongs to the SCAMP family. Interacts with NEDD4, NEDD4L and TSG101. Interacts with RNF126. In terms of processing, monoubiquitinated. In terms of tissue distribution, widely expressed, with highest expression in heart and skeletal muscle.

The protein localises to the membrane. In terms of biological role, functions in post-Golgi recycling pathways. Acts as a recycling carrier to the cell surface. The sequence is that of Secretory carrier-associated membrane protein 3 (SCAMP3) from Homo sapiens (Human).